The following is a 104-amino-acid chain: Urease subunit beta (104 aa).

Belongs to the urease beta subunit family. In terms of assembly, heterotrimer of UreA (gamma), UreB (beta) and UreC (alpha) subunits. Three heterotrimers associate to form the active enzyme.

It localises to the cytoplasm. The enzyme catalyses urea + 2 H2O + H(+) = hydrogencarbonate + 2 NH4(+). The protein operates within nitrogen metabolism; urea degradation; CO(2) and NH(3) from urea (urease route): step 1/1. The chain is Urease subunit beta from Rhodococcus jostii (strain RHA1).